Consider the following 30-residue polypeptide: Cycloviolacin-O5 (30 aa).

Positions 1 to 30 form a cross-link, cyclopeptide (Gly-Asn); it reads GTPCGESCVWIPCISSAVGCSCKNKVCYKN. 3 disulfide bridges follow: Cys4-Cys20, Cys8-Cys22, and Cys13-Cys27.

Post-translationally, this is a cyclic peptide.

Functionally, probably participates in a plant defense mechanism. The polypeptide is Cycloviolacin-O5 (Viola odorata (Sweet violet)).